The primary structure comprises 280 residues: Undecaprenyl-diphosphatase (280 aa).

8 consecutive transmembrane segments (helical) span residues 1–21 (MEWI…FLPI), 40–60 (GAAF…VFFW), 89–109 (WLVV…QNAI), 116–136 (LWIV…ADAV), 146–166 (LTVK…IPGV), 191–211 (FLLA…KIVA), 227–247 (LATV…LKFI), and 260–280 (IALG…ATLS).

Belongs to the UppP family.

The protein resides in the cell membrane. It catalyses the reaction di-trans,octa-cis-undecaprenyl diphosphate + H2O = di-trans,octa-cis-undecaprenyl phosphate + phosphate + H(+). Catalyzes the dephosphorylation of undecaprenyl diphosphate (UPP). Confers resistance to bacitracin. This Renibacterium salmoninarum (strain ATCC 33209 / DSM 20767 / JCM 11484 / NBRC 15589 / NCIMB 2235) protein is Undecaprenyl-diphosphatase.